Reading from the N-terminus, the 340-residue chain is Phosphate acyltransferase (340 aa).

Belongs to the PlsX family. In terms of assembly, homodimer. Probably interacts with PlsY.

It localises to the cytoplasm. The catalysed reaction is a fatty acyl-[ACP] + phosphate = an acyl phosphate + holo-[ACP]. It functions in the pathway lipid metabolism; phospholipid metabolism. Functionally, catalyzes the reversible formation of acyl-phosphate (acyl-PO(4)) from acyl-[acyl-carrier-protein] (acyl-ACP). This enzyme utilizes acyl-ACP as fatty acyl donor, but not acyl-CoA. The chain is Phosphate acyltransferase from Helicobacter pylori (strain HPAG1).